Here is a 119-residue protein sequence, read N- to C-terminus: Methylglyoxal synthase (119 aa).

Residues 1-119 (MKIALIAHDK…KTAELIIKQF (119 aa)) enclose the MGS-like domain. Substrate contacts are provided by residues His-8, Lys-12, 34–37 (TGTT), and 54–55 (SG). Asp-60 (proton donor/acceptor) is an active-site residue. His-87 provides a ligand contact to substrate.

This sequence belongs to the methylglyoxal synthase family.

The catalysed reaction is dihydroxyacetone phosphate = methylglyoxal + phosphate. Its function is as follows. Catalyzes the formation of methylglyoxal from dihydroxyacetone phosphate. The sequence is that of Methylglyoxal synthase from Clostridium beijerinckii (strain ATCC 51743 / NCIMB 8052) (Clostridium acetobutylicum).